A 630-amino-acid polypeptide reads, in one-letter code: MKEKHNPRRKYCLISGLAIIFSLWIIIGNGAKVQAETITVSTPIKQIFPDDAFAETIKDNLKKKSVTDAVTQNELNSIDQIIANNSDIKSVQGIQYLPNVTKLFLNGNKLTDIKPLTNLKNLGWLFLDENKIKDLSSLKDLKKLKSLSLEHNGISDINGLVHLPQLESLYLGNNKITDITVLSRLTKLDTLSLEDNQISDIVPLAGLTKLQNLYLSKNHISDLRALAGLKNLDVLELFSQECLNKPINHQSNLVVPNTVKNTDGSLVTPEIISDDGDYEKPNVKWHLPEFTNEVSFIFYQPVTIGKAKARFHGRVTQPLKEVYTVSYDVDGTVIKTKVEAGTRITAPKPPTKQGYVFKGWYTEKNGGHEWNFNTDYMSGNDFTLYAVFKAETTEKTVNLTRYVKYIRGNAGIYKLPREDNSLKQGTLASHRCKALTVDREARNGGKLWYRLKNIGWTKAENLSLDRYDKMEYDKGVTAYARVRNASGNSVWTKPYNTAGAKHVNKLSVYQGKNMRILREAKTPITTWYQFSIGGKVIGWVDTRALNTFYKQSMEKPTRLTRYVSANKAGESYYKVPVADNPVKRGTLAKYKNQKLIVDCQATIEGQLWYRIRTSSTFIGWTKAANLRAQK.

A signal peptide spans 1-30 (MKEKHNPRRKYCLISGLAIIFSLWIIIGNG). Residues 31-76 (AKVQAETITVSTPIKQIFPDDAFAETIKDNLKKKSVTDAVTQNELN) form the LRRNT domain. 4 residues coordinate Ca(2+): proline 49, aspartate 51, glutamate 55, and aspartate 59. 7 LRR repeats span residues 75–97 (LNSIDQIIANNSDIKSVQGIQYL), 98–121 (PNVTKLFLNGNKLTDIKPLTNLKN), 123–141 (GWLFLDENKIKDLSSLKDL), 142–163 (KKLKSLSLEHNGISDINGLVHL), 164–187 (PQLESLYLGNNKITDITVLSRLTK), 189–207 (DTLSLEDNQISDIVPLAGL), and 208–231 (TKLQNLYLSKNHISDLRALAGLKN). The ig-like region stretch occupies residues 241–319 (ECLNKPINHQ…RFHGRVTQPL (79 aa)). Positions 241–330 (ECLNKPINHQ…EVYTVSYDVD (90 aa)) constitute an LRRCT domain. Residues 320-392 (KEVYTVSYDV…TLYAVFKAET (73 aa)) are b repeat region. GW domains are found at residues 393–467 (TEKT…LDRY), 472–550 (YDKG…TFYK), and 553–630 (MEKP…RAQK). The tract at residues 399–630 (LTRYVKYIRG…TKAANLRAQK (232 aa)) is GW repeat region, necessary and sufficient for cell surface attachment, interacts with host C1QBP and with heparin.

It belongs to the internalin family. Monomer. Interacts via its LRR repeats with the extracellular portion of mammalian host MET; MET can bind HGF, its endogenous ligand, and InlB simultaneously. Probably forms a dimer upon interaction with host MET, which subsequently allows dimerization of the host MET and subsequent host signaling; dimerization probably occurs via the convex surface of InlB. Interacts with host complement component 1 Q subcomponent-binding protein (C1QBP). Interacts in vitro with human intestinal mucin-2 (MUC2) but not with mucin-1. The cofactor is Ca(2+).

The protein resides in the secreted. It is found in the cell surface. Its subcellular location is the cell membrane. In terms of biological role, mediates the entry of L.monocytogenes into normally non-phagocytic mammalian host cells. Its host receptor is hepatocyte growth factor receptor (HGF receptor, a tyrosine kinase, MET) which is tyrosine-phosphorylated in response to InlB in human, green monkey, mouse and dog cell lines. Downstream adapter proteins GAB1 and CBL are phosphorylated in response to InlB, which also causes cell colony scattering. InlB binding to mammalian cells is saturable and inhibited by EDTA; InlB-coated beads can be taken up by host cells. Complement component 1 Q subcomponent-binding protein (gC1q-R, C1QBP) might act as an InlB receptor, leading to activation of PI3-kinase in green monkey cells. Stimulation of Tyr-phosphorylation by InlB is antagonized by C1QBP, showing that potentiation of MET signaling via the GW domains is not mediated by C1QBP; the exact role of C1QBP remains to be determined. Stimulation of Tyr-phosphorylation of MET by InlB is potentiated by the InlB GW domains and glycosaminoglycans such as heparin; exogenously added InlB, or hepatocyte growth factor (HGF) will also substitute for bacterial InlB, suggesting InlB promotes bacterial invasion by mimicking the hormone HGF. May stimulate phosphatidylinositol 4,5-bisphosphate 3-kinase (PI3-kinase) in green monkey cells, has less effect in humans as PI3-kinase is constitutively and highly expressed in Caco cells. Binds heparin; C1QBP and heparin seem to bind to the GW domains. The chain is Internalin B (inlB) from Listeria monocytogenes serotype 1/2a (strain EGD / Mackaness).